The chain runs to 417 residues: MDKIEIRGGKRLTGEVRISGAKNAALPLLASSILVDGAMTFTNVPDLVDVRSIKMLLRDLGAGCEEGEGTVLIDGSGIHKIEAAYELVRKMRASILVLGPLVARFGHARVSLPGGCAIGARPVDMHLKGLKALGATITIENGYIEAKADRLKGNEIYFDIPTVTGTENLMMAATLAKGTTVLRNCAREPEITALANALNLMGARVTGAGTAVIRINGVDGLSPATIHVIPDRIEAGTFMVAAAATGGDVLVTGCEPENMGGIINKLRQTGALVEIIDHGVKVSGGKSILSTDIKTLPYPGFPTDMQAQFMVLMAISQGNSVIHETIFENRFMHVNELQRMGADISISGGNYAMVRGVNALSGAEVMASDLRASASLVIAGLVARGVTTIHRVYHIDRGYEALEKKFSALGADIKRVK.

Residue 22–23 (KN) participates in phosphoenolpyruvate binding. Arginine 92 serves as a coordination point for UDP-N-acetyl-alpha-D-glucosamine. Cysteine 116 (proton donor) is an active-site residue. Residue cysteine 116 is modified to 2-(S-cysteinyl)pyruvic acid O-phosphothioketal. 2 residues coordinate UDP-N-acetyl-alpha-D-glucosamine: aspartate 304 and isoleucine 326.

This sequence belongs to the EPSP synthase family. MurA subfamily.

It localises to the cytoplasm. It carries out the reaction phosphoenolpyruvate + UDP-N-acetyl-alpha-D-glucosamine = UDP-N-acetyl-3-O-(1-carboxyvinyl)-alpha-D-glucosamine + phosphate. It functions in the pathway cell wall biogenesis; peptidoglycan biosynthesis. Its function is as follows. Cell wall formation. Adds enolpyruvyl to UDP-N-acetylglucosamine. The chain is UDP-N-acetylglucosamine 1-carboxyvinyltransferase from Desulforapulum autotrophicum (strain ATCC 43914 / DSM 3382 / VKM B-1955 / HRM2) (Desulfobacterium autotrophicum).